The chain runs to 408 residues: Epsin-3 (408 aa).

An N-acetylserine modification is found at S2. The 134-residue stretch at 24 to 157 (NVVFNYTEME…SDDNKIRAER (134 aa)) folds into the ENTH domain. The tract at residues 162-182 (ETAKKYKGVAGGSASADGSLN) is disordered. A phosphoserine mark is found at S196, S198, S203, S212, and S223. Disordered stretches follow at residues 199–322 (ADFD…ITPA) and 338–408 (TAKA…LLSF). Acidic residues predominate over residues 201–210 (FDSDNEDNED). The segment covering 211-231 (GSFSQNGYNDNASRATSTPGQ) has biased composition (polar residues). The span at 249–263 (KPSKELIQEDEKKAD) shows a compositional bias: basic and acidic residues. Positions 264–273 (EEEDDDDEFS) are enriched in acidic residues. The segment covering 279-317 (VPVTNPANSFNLLNTSPIEGMPATTSSMPFYNSSTTDQG) has biased composition (polar residues). The span at 338–361 (TAKASAEAPSAPKASQAKAAASNP) shows a compositional bias: low complexity. Composition is skewed to polar residues over residues 362–371 (VSNSTTALST) and 388–398 (QQEQNTNNNHT). Residues 399 to 408 (SSKEIDLLSF) show a composition bias toward basic and acidic residues.

As to quaternary structure, interacts with the clathrin adapter GGA2, and VPS27.

It localises to the cytoplasm. Its subcellular location is the golgi apparatus. The protein localises to the trans-Golgi network membrane. The protein resides in the cytoplasmic vesicle. It is found in the clathrin-coated vesicle membrane. Its function is as follows. Involved in the recruitment of clathrin to the Golgi network and endosomes to form clathrin coated vesicles. Plays a role in the trafficking of clathrin between the Golgi network and endosomes. Binds to membranes enriched in phosphatidylinositol-3,5-bisphosphate (PtdIns(3,5)P2) and, in association with VPS27, is involved in protein sorting at the multivesicular body (MVB). The chain is Epsin-3 (ENT3) from Saccharomyces cerevisiae (strain ATCC 204508 / S288c) (Baker's yeast).